The primary structure comprises 281 residues: ATP phosphoribosyltransferase (281 aa).

It belongs to the ATP phosphoribosyltransferase family. Long subfamily. The cofactor is Mg(2+).

It localises to the cytoplasm. The enzyme catalyses 1-(5-phospho-beta-D-ribosyl)-ATP + diphosphate = 5-phospho-alpha-D-ribose 1-diphosphate + ATP. It participates in amino-acid biosynthesis; L-histidine biosynthesis; L-histidine from 5-phospho-alpha-D-ribose 1-diphosphate: step 1/9. With respect to regulation, feedback inhibited by histidine. Its function is as follows. Catalyzes the condensation of ATP and 5-phosphoribose 1-diphosphate to form N'-(5'-phosphoribosyl)-ATP (PR-ATP). Has a crucial role in the pathway because the rate of histidine biosynthesis seems to be controlled primarily by regulation of HisG enzymatic activity. This Corynebacterium efficiens (strain DSM 44549 / YS-314 / AJ 12310 / JCM 11189 / NBRC 100395) protein is ATP phosphoribosyltransferase.